The sequence spans 255 residues: MSVYTVKQMARLSGVSVRALHHYDAIGLLKPRAVGANGYRYYDRQDLLRLQQILFHRALETPLKDIQAALDQPGFDLAAALRAQRERLAAQAERYARLVDVVDRTLADLEGDETMDDKHLFEGFDPEKQARHEAWLVEHYGDEATRRIADAKAGMKSWGKKDWSQFQEEAKAIEHDLAKALTQGLPVDSAPVTAIMRRHWAWVGRSWNREPTPDAFAGLGHLYQANPEFTARYEAIAPGLTEYFSEAMRAFARGR.

Residues 3-72 form the HTH merR-type domain; sequence VYTVKQMARL…LKDIQAALDQ (70 aa). Residues 6-25 constitute a DNA-binding region (H-T-H motif); it reads VKQMARLSGVSVRALHHYDA.

Its function is as follows. Regulates the induction of katG (catalase-peroxidase) in stationary phase. The chain is HTH-type transcriptional regulator SkgA (skgA) from Caulobacter vibrioides (strain ATCC 19089 / CIP 103742 / CB 15) (Caulobacter crescentus).